A 130-amino-acid chain; its full sequence is Flagellar assembly factor FliW (130 aa).

Belongs to the FliW family. As to quaternary structure, interacts with translational regulator CsrA and flagellin(s).

It localises to the cytoplasm. Its function is as follows. Acts as an anti-CsrA protein, binds CsrA and prevents it from repressing translation of its target genes, one of which is flagellin. Binds to flagellin and participates in the assembly of the flagellum. The protein is Flagellar assembly factor FliW of Borrelia hermsii (strain HS1 / DAH).